Here is a 188-residue protein sequence, read N- to C-terminus: E3 ubiquitin-protein ligase RNF183 (188 aa).

The Cytoplasmic segment spans residues 1–157 (MAEQQGREPE…RECFRNPHFR (157 aa)). An RING-type zinc finger spans residues 11 to 58 (CPVCWNPFNNTFHTPKVLDCCHSFCVECLAHISLVTPTRRRLLCPLCR). The helical; Anchor for type IV membrane protein transmembrane segment at 158 to 178 (IFAYMMAVILCGTVLFIFSIF) threads the bilayer. The Lumenal portion of the chain corresponds to 179 to 188 (CTRRFFWGVG).

As to quaternary structure, interacts with FATE1. Interacts with SEC16A. Interacts with BCL2L1. Autoubiquitinated (in vitro).

Its subcellular location is the endoplasmic reticulum membrane. It is found in the endoplasmic reticulum. The protein localises to the golgi apparatus. The protein resides in the cis-Golgi network membrane. It localises to the lysosome. It carries out the reaction S-ubiquitinyl-[E2 ubiquitin-conjugating enzyme]-L-cysteine + [acceptor protein]-L-lysine = [E2 ubiquitin-conjugating enzyme]-L-cysteine + N(6)-ubiquitinyl-[acceptor protein]-L-lysine.. It functions in the pathway protein modification; protein ubiquitination. Acts as an E3 ubiquitin ligase catalyzing the covalent attachment of ubiquitin moieties onto substrate proteins. Triggers apoptosis in response to prolonged ER stress by mediating the polyubiquitination and subsequent proteasomal degradation of BCL2L1. May collaborate with FATE1 to restrain BIK protein levels thus regulating apoptotic signaling. This is E3 ubiquitin-protein ligase RNF183 (RNF183) from Bos taurus (Bovine).